The chain runs to 185 residues: Ribosome-recycling factor (185 aa).

It belongs to the RRF family.

It is found in the cytoplasm. Its function is as follows. Responsible for the release of ribosomes from messenger RNA at the termination of protein biosynthesis. May increase the efficiency of translation by recycling ribosomes from one round of translation to another. The protein is Ribosome-recycling factor of Parafrankia sp. (strain EAN1pec).